The sequence spans 283 residues: Pantothenate synthetase (283 aa).

30-37 is an ATP binding site; the sequence is MGNLHDGH. The Proton donor role is filled by His37. Gln61 contributes to the (R)-pantoate binding site. Gln61 is a binding site for beta-alanine. ATP is bound at residue 149-152; that stretch reads GEKD. Gln155 provides a ligand contact to (R)-pantoate. ATP is bound at residue 186-189; the sequence is LSSR.

Belongs to the pantothenate synthetase family. As to quaternary structure, homodimer.

It localises to the cytoplasm. The enzyme catalyses (R)-pantoate + beta-alanine + ATP = (R)-pantothenate + AMP + diphosphate + H(+). The protein operates within cofactor biosynthesis; (R)-pantothenate biosynthesis; (R)-pantothenate from (R)-pantoate and beta-alanine: step 1/1. Its function is as follows. Catalyzes the condensation of pantoate with beta-alanine in an ATP-dependent reaction via a pantoyl-adenylate intermediate. The sequence is that of Pantothenate synthetase from Escherichia coli (strain ATCC 8739 / DSM 1576 / NBRC 3972 / NCIMB 8545 / WDCM 00012 / Crooks).